Reading from the N-terminus, the 204-residue chain is Holliday junction branch migration complex subunit RuvA (204 aa).

A domain I region spans residues 1–64; sequence MIAKLTGILD…ETDQRLIGFT (64 aa). The tract at residues 65–143 is domain II; the sequence is SAGERAWFRL…GLAGYASPVG (79 aa). A flexible linker region spans residues 144–154; it reads PGGEAFVAPPG. A domain III region spans residues 154–204; sequence GNASADAVSALQNLGFKPAVASSAVAAAVKELGEDAGLNDLVRVALKRAAG.

The protein belongs to the RuvA family. Homotetramer. Forms an RuvA(8)-RuvB(12)-Holliday junction (HJ) complex. HJ DNA is sandwiched between 2 RuvA tetramers; dsDNA enters through RuvA and exits via RuvB. An RuvB hexamer assembles on each DNA strand where it exits the tetramer. Each RuvB hexamer is contacted by two RuvA subunits (via domain III) on 2 adjacent RuvB subunits; this complex drives branch migration. In the full resolvosome a probable DNA-RuvA(4)-RuvB(12)-RuvC(2) complex forms which resolves the HJ.

Its subcellular location is the cytoplasm. Functionally, the RuvA-RuvB-RuvC complex processes Holliday junction (HJ) DNA during genetic recombination and DNA repair, while the RuvA-RuvB complex plays an important role in the rescue of blocked DNA replication forks via replication fork reversal (RFR). RuvA specifically binds to HJ cruciform DNA, conferring on it an open structure. The RuvB hexamer acts as an ATP-dependent pump, pulling dsDNA into and through the RuvAB complex. HJ branch migration allows RuvC to scan DNA until it finds its consensus sequence, where it cleaves and resolves the cruciform DNA. This Novosphingobium aromaticivorans (strain ATCC 700278 / DSM 12444 / CCUG 56034 / CIP 105152 / NBRC 16084 / F199) protein is Holliday junction branch migration complex subunit RuvA.